A 697-amino-acid chain; its full sequence is Elongation factor G 2 (697 aa).

The region spanning 5–280 (SKYRNIGIFA…AVVDYLPDPV (276 aa)) is the tr-type G domain. GTP is bound by residues 14–21 (AHVDAGKT), 78–82 (DTPGH), and 132–135 (NKLD).

It belongs to the TRAFAC class translation factor GTPase superfamily. Classic translation factor GTPase family. EF-G/EF-2 subfamily.

It localises to the cytoplasm. In terms of biological role, catalyzes the GTP-dependent ribosomal translocation step during translation elongation. During this step, the ribosome changes from the pre-translocational (PRE) to the post-translocational (POST) state as the newly formed A-site-bound peptidyl-tRNA and P-site-bound deacylated tRNA move to the P and E sites, respectively. Catalyzes the coordinated movement of the two tRNA molecules, the mRNA and conformational changes in the ribosome. This chain is Elongation factor G 2, found in Shewanella frigidimarina (strain NCIMB 400).